The chain runs to 622 residues: Chaperone protein HscA homolog (622 aa).

The protein belongs to the heat shock protein 70 family.

In terms of biological role, chaperone involved in the maturation of iron-sulfur cluster-containing proteins. Has a low intrinsic ATPase activity which is markedly stimulated by HscB. This chain is Chaperone protein HscA homolog, found in Burkholderia mallei (strain NCTC 10247).